The primary structure comprises 361 residues: Membrane-bound lytic murein transglycosylase B (361 aa).

The N-terminal stretch at 1 to 18 (MFKRRYVTLLPLFVLLAA) is a signal peptide. The N-palmitoyl cysteine moiety is linked to residue cysteine 19. Cysteine 19 carries the S-diacylglycerol cysteine lipid modification. Glutamate 162 is a catalytic residue.

As to quaternary structure, monomer.

It is found in the cell outer membrane. It catalyses the reaction Exolytic cleavage of the (1-&gt;4)-beta-glycosidic linkage between N-acetylmuramic acid (MurNAc) and N-acetylglucosamine (GlcNAc) residues in peptidoglycan, from either the reducing or the non-reducing ends of the peptidoglycan chains, with concomitant formation of a 1,6-anhydrobond in the MurNAc residue.. Functionally, murein-degrading enzyme. Catalyzes the cleavage of the glycosidic bonds between N-acetylmuramic acid and N-acetylglucosamine residues in peptidoglycan. May play a role in recycling of muropeptides during cell elongation and/or cell division. The polypeptide is Membrane-bound lytic murein transglycosylase B (mltB) (Escherichia coli (strain K12)).